The sequence spans 620 residues: MTSSKMEQRSLLCFLYLLLLFNFTLRVAGNAEGDALTQLKNSLSSGDPANNVLQSWDATLVTPCTWFHVTCNPENKVTRVDLGNAKLSGKLVPELGQLLNLQYLELYSNNITGEIPEELGDLVELVSLDLYANSISGPIPSSLGKLGKLRFLRLNNNSLSGEIPMTLTSVQLQVLDISNNRLSGDIPVNGSFSLFTPISFANNSLTDLPEPPPTSTSPTPPPPSGGQMTAAIAGGVAAGAALLFAVPAIAFAWWLRRKPQDHFFDVPAEEDPEVHLGQLKRFTLRELLVATDNFSNKNVLGRGGFGKVYKGRLADGNLVAVKRLKEERTKGGELQFQTEVEMISMAVHRNLLRLRGFCMTPTERLLVYPYMANGSVASCLRERPEGNPALDWPKRKHIALGSARGLAYLHDHCDQKIIHRDVKAANILLDEEFEAVVGDFGLAKLMNYNDSHVTTAVRGTIGHIAPEYLSTGKSSEKTDVFGYGVMLLELITGQKAFDLARLANDDDIMLLDWVKEVLKEKKLESLVDAELEGKYVETEVEQLIQMALLCTQSSAMERPKMSEVVRMLEGDGLAERWEEWQKEEMPIHDFNYQAYPHAGTDWLIPYSNSLIENDYPSGPR.

Positions 1–33 are cleaved as a signal peptide; it reads MTSSKMEQRSLLCFLYLLLLFNFTLRVAGNAEG. The Extracellular portion of the chain corresponds to 34-234; that stretch reads DALTQLKNSL…GGQMTAAIAG (201 aa). LRR repeat units lie at residues 100–122, 124–146, 148–170, 171–193, and 194–215; these read NLQY…LGDL, ELVS…LGKL, KLRF…LTSV, QLQV…GSFS, and LFTP…PPTS. N-linked (GlcNAc...) asparagine glycosylation is present at Asn-110. N-linked (GlcNAc...) asparagine glycosylation is found at Asn-156, Asn-189, and Asn-202. The tract at residues 205–227 is disordered; that stretch reads LTDLPEPPPTSTSPTPPPPSGGQ. A compositionally biased stretch (pro residues) spans 209–224; sequence PEPPPTSTSPTPPPPS. Residues 235–255 traverse the membrane as a helical segment; sequence GVAAGAALLFAVPAIAFAWWL. At 256–620 the chain is on the cytoplasmic side; the sequence is RRKPQDHFFD…IENDYPSGPR (365 aa). Thr-291 is subject to Phosphothreonine. One can recognise a Protein kinase domain in the interval 294–591; that stretch reads FSNKNVLGRG…KEEMPIHDFN (298 aa). Ser-295 is subject to Phosphoserine. ATP is bound by residues 300 to 308 and Lys-322; that span reads LGRGGFGKV. Ser-375 and Ser-378 each carry phosphoserine. Asp-421 functions as the Proton acceptor in the catalytic mechanism. Phosphothreonine occurs at positions 454, 455, and 460. Tyr-468 is subject to Phosphotyrosine. Ser-470 is modified (phosphoserine). A Phosphothreonine modification is found at Thr-471. Ser-475 carries the phosphoserine modification. Thr-551 bears the Phosphothreonine mark.

It belongs to the protein kinase superfamily. Ser/Thr protein kinase family. As to quaternary structure, interacts with the EF-Tu receptor EFR and FLS2 in a specific ligand-induced manner. Interacts with TMK4/BARK1. Interacts with ERECTA in a EPF2-induced manner. Interacts with ERL1 in a EPF1-induced manner. Interacts with TMM. Forms a complex with MIK2 in response to SCOOP12 perception. Autophosphorylated on Thr and Tyr residues.

The protein resides in the cell membrane. It carries out the reaction L-seryl-[protein] + ATP = O-phospho-L-seryl-[protein] + ADP + H(+). The enzyme catalyses L-threonyl-[protein] + ATP = O-phospho-L-threonyl-[protein] + ADP + H(+). The catalysed reaction is L-tyrosyl-[protein] + ATP = O-phospho-L-tyrosyl-[protein] + ADP + H(+). In terms of biological role, dual specificity kinase acting on both serine/threonine- and tyrosine-containing substrates. Positively regulates the BR-dependent plant growth pathway and negatively regulates the BR-independent cell-death pathway. Required during SCOOP small peptides (e.g. SCOOP10 and SCOOP12) perception and signaling; associates with MIK2 as a coreceptor upon MIK2 perception of SCOOP peptides, and relays the signaling through the activation of receptor-like cytosolic kinases (RLCKs) BIK1 and PBL1. This chain is Somatic embryogenesis receptor kinase 4, found in Arabidopsis thaliana (Mouse-ear cress).